Here is a 1209-residue protein sequence, read N- to C-terminus: ATP-dependent helicase/nuclease subunit A (1209 aa).

One can recognise a UvrD-like helicase ATP-binding domain in the interval 9-482; sequence SQWTDEQWQA…IDLAKNFRSR (474 aa). An ATP-binding site is contributed by 30–37; it reads AAAGSGKT. In terms of domain architecture, UvrD-like helicase C-terminal spans 510–798; that stretch reads AALRFGAQDY…RMMTIHKSKG (289 aa).

The protein belongs to the helicase family. AddA subfamily. In terms of assembly, heterodimer of AddA and AddB/RexB. Mg(2+) is required as a cofactor.

It carries out the reaction Couples ATP hydrolysis with the unwinding of duplex DNA by translocating in the 3'-5' direction.. The enzyme catalyses ATP + H2O = ADP + phosphate + H(+). Functionally, the heterodimer acts as both an ATP-dependent DNA helicase and an ATP-dependent, dual-direction single-stranded exonuclease. Recognizes the chi site generating a DNA molecule suitable for the initiation of homologous recombination. The AddA nuclease domain is required for chi fragment generation; this subunit has the helicase and 3' -&gt; 5' nuclease activities. This is ATP-dependent helicase/nuclease subunit A from Anoxybacillus flavithermus (strain DSM 21510 / WK1).